Consider the following 68-residue polypeptide: Movement protein TGBp3 (68 aa).

Residues 1 to 6 (MFSGKE) lie on the Lumenal side of the membrane. The chain crosses the membrane as a helical span at residues 7–26 (ITLFALSTLIALIVLNYMSA). The Cytoplasmic portion of the chain corresponds to 27-68 (TPNPVCLIELTGHSAVLRGNNCESLTSGVIEALSAHLHGLRN).

This sequence belongs to the Tymovirales TGBp3 protein family.

It is found in the host endoplasmic reticulum membrane. Its function is as follows. Plays a role in viral cell-to-cell propagation, by facilitating genome transport to neighboring plant cells through plasmosdesmata. May induce the formation of granular vesicles derived from the Endoplasmic reticulum, which align on actin filaments. This Papaya mosaic potexvirus (PMV) protein is Movement protein TGBp3.